Here is a 253-residue protein sequence, read N- to C-terminus: BRI3-binding protein (253 aa).

4 consecutive transmembrane segments (helical) span residues 19–39, 131–151, 164–181, and 190–210; these read VLLPVLLLALLLLALVAPGAQ, ALVLVGVVLLAYWFLSLTLGF, FWLVRVILFSMSCVYILH, and AVLPLCVVVAIYFMTGPMGYW. Residues 219-253 adopt a coiled-coil conformation; sequence SPSVEEKLEHLENQVRLLNIRLNRVLENLDRSKDK. S250 is subject to Phosphoserine.

Interacts with LETMD1. Interacts with BRI3. Interacts with BRI3; the interaction is weak. Interacts with TMEM238L.

Its subcellular location is the mitochondrion outer membrane. Functionally, involved in tumorigenesis and may function by stabilizing p53/TP53. The protein is BRI3-binding protein of Mus musculus (Mouse).